Reading from the N-terminus, the 1729-residue chain is 182 kDa tankyrase-1-binding protein (1729 aa).

Residues 1-12 (MKVSTLRESSAM) show a composition bias toward polar residues. The segment at 1–151 (MKVSTLRESS…VRKAPAPFRP (151 aa)) is disordered. At serine 14 the chain carries Phosphoserine. Residues 46 to 63 (ALPAKPALPAKPSLLVPV) are compositionally biased toward low complexity. The segment covering 117–127 (TGKEEAGKEEP) has biased composition (basic and acidic residues). Threonine 131 bears the Phosphothreonine mark. Phosphoserine occurs at positions 178, 221, and 228. 3 disordered regions span residues 184 to 450 (GSRL…LAAL), 484 to 603 (PSGL…ESPL), and 657 to 880 (ETTQ…SSRD). The acidic stretch occupies residues 210–1572 (DEDGSTLFRG…TEILDSAMYR (1363 aa)). The span at 230–245 (AECREEHSKTPEERSL) shows a compositional bias: basic and acidic residues. Threonine 239 is subject to Phosphothreonine. Phosphoserine occurs at positions 287 and 301. Low complexity predominate over residues 352-363 (PSPGLPAEGAPE). A compositionally biased stretch (pro residues) spans 364-374 (APRPSSPPPEV). Phosphoserine is present on residues serine 429, serine 435, serine 437, serine 494, and serine 498. Composition is skewed to low complexity over residues 500 to 512 (ITEA…AAEA), 524 to 541 (VSQQ…SGSS), and 572 to 583 (LPTTEGTPGLPL). Threonine 501 is subject to Phosphothreonine. A phosphoserine mark is found at serine 601, serine 672, serine 691, serine 695, serine 712, serine 724, serine 744, serine 762, and serine 806. A compositionally biased stretch (polar residues) spans 738–753 (PQPSSFSPSSWCQGAS). A compositionally biased stretch (polar residues) spans 803-812 (ASSSQDQSKV). Residue threonine 833 is modified to Phosphothreonine. Serine 836, serine 851, serine 872, serine 877, serine 882, and serine 893 each carry phosphoserine. Basic and acidic residues predominate over residues 858–872 (RDAELQDQEFGKRDS). Tyrosine 897 is modified (phosphotyrosine). Residues 897-1083 (YASQDANEQG…ADLEDGEMGK (187 aa)) are disordered. Residues serine 899, serine 920, serine 936, and serine 976 each carry the phosphoserine modification. A Phosphothreonine modification is found at threonine 979. Residues serine 983, serine 987, serine 1004, serine 1008, serine 1013, serine 1024, serine 1029, serine 1054, serine 1073, serine 1091, serine 1103, serine 1133, serine 1138, serine 1158, serine 1178, serine 1248, and serine 1253 each carry the phosphoserine modification. Positions 1012–1021 (GSRDAGRPGE) are enriched in basic and acidic residues. A compositionally biased stretch (polar residues) spans 1043 to 1054 (RDQSSWQNSDAS). The tract at residues 1240-1302 (EVGEGGGHSQ…GAVCSPGESK (63 aa)) is disordered. Threonine 1282 is modified (phosphothreonine). A phosphoserine mark is found at serine 1297, serine 1328, serine 1331, serine 1383, and serine 1385. Positions 1362–1561 (AREHGVGGVS…SPSQDFSFIE (200 aa)) are disordered. A compositionally biased stretch (basic and acidic residues) spans 1389-1400 (EARDPLEARELG). The segment covering 1406 to 1419 (GPETQGEDYSSSSL) has biased composition (polar residues). Phosphoserine occurs at positions 1435, 1439, 1450, 1452, 1473, 1476, 1503, and 1506. The interval 1450–1542 (SGSQGLLEEM…SDQGPAQTSR (93 aa)) is tankyrase-binding. Threonine 1518 carries the phosphothreonine modification. Serine 1533, serine 1545, and serine 1558 each carry phosphoserine. Position 1563 is a phosphothreonine (threonine 1563). The tract at residues 1575-1729 (ANLGRKRGHR…QALKLKKKKV (155 aa)) is disordered. Positions 1577–1586 (LGRKRGHRAP) are enriched in basic residues. Over residues 1602–1615 (SDAHLFQDSTEPRA) the composition is skewed to basic and acidic residues. A phosphoserine mark is found at serine 1620, serine 1621, and serine 1631. A Nuclear localization signal motif is present at residues 1629 to 1635 (PQSRRTR). Lysine 1644 carries the N6-methyllysine modification. 3 positions are modified to phosphoserine: serine 1652, serine 1666, and serine 1715. Positions 1665 to 1679 (RSAEEGELAESKSSQ) are enriched in basic and acidic residues. The Nuclear localization signal signature appears at 1723–1729 (KLKKKKV).

As to quaternary structure, binds to the ANK repeat domain of TNKS1 and TNKS2. In terms of processing, ADP-ribosylated by TNKS1 (in vitro). In terms of tissue distribution, detected in testis, ovary, lung, skeletal muscle, heart, prostate and pancreas, and at very low levels in brain and peripheral blood leukocytes.

It is found in the nucleus. It localises to the cytoplasm. The protein localises to the cytoskeleton. The protein resides in the chromosome. This is 182 kDa tankyrase-1-binding protein (TNKS1BP1) from Homo sapiens (Human).